Consider the following 331-residue polypeptide: 5'-AMP-activated protein kinase subunit gamma-1 (331 aa).

Polar residues predominate over residues Met1 to Ala12. Positions Met1 to Asn26 are disordered. CBS domains lie at Pro43–Leu103, Ser125–Glu187, and Ile198–Val260. Residues Arg70, Met85–Asp90, Val130, His151–Arg152, and Lys170 contribute to the ADP site. Residues Arg70, Met85 to Asp90, Val130, His151, His151 to Arg152, Lys170, Thr200, Ala205, Ser226 to Ala227, and Ser242 to Asp245 each bind AMP. ATP contacts are provided by residues Arg70, Met85 to Asp90, Val130, His151 to Arg152, Arg152, and Lys170. Positions Leu138–Glu159 match the AMPK pseudosubstrate motif. Ser242 to Asp245 is an ADP binding site. Ser242–Asp245 is a binding site for ATP. At Ser261 the chain carries Phosphoserine; by ULK1. The residue at position 263 (Thr263) is a Phosphothreonine; by ULK1. Arg269 contributes to the ADP binding site. Residue Arg269 participates in AMP binding. Arg269 is a binding site for ATP. Residue Ser270 is modified to Phosphoserine; by ULK1. A CBS 4 domain is found at Tyr272 to Lys329. ADP is bound by residues Leu277 and His298 to Arg299. Residues Leu277, His298, His298–Arg299, and Ser314–Asp317 contribute to the AMP site. Residues Leu277 and His298–Arg299 each bind ATP.

Belongs to the 5'-AMP-activated protein kinase gamma subunit family. As to quaternary structure, AMPK is a heterotrimer of an alpha catalytic subunit (PRKAA1 or PRKAA2), a beta (PRKAB1 or PRKAB2) and a gamma non-catalytic subunits (PRKAG1, PRKAG2 or PRKAG3). Interacts with FNIP1 and FNIP2. Phosphorylated by ULK1 and ULK2; leading to negatively regulate AMPK activity and suggesting the existence of a regulatory feedback loop between ULK1, ULK2 and AMPK. In terms of processing, glycosylated; O-GlcNAcylated by OGT, promoting the AMP-activated protein kinase (AMPK) activity.

AMP/ATP-binding subunit of AMP-activated protein kinase (AMPK), an energy sensor protein kinase that plays a key role in regulating cellular energy metabolism. In response to reduction of intracellular ATP levels, AMPK activates energy-producing pathways and inhibits energy-consuming processes: inhibits protein, carbohydrate and lipid biosynthesis, as well as cell growth and proliferation. AMPK acts via direct phosphorylation of metabolic enzymes, and by longer-term effects via phosphorylation of transcription regulators. Also acts as a regulator of cellular polarity by remodeling the actin cytoskeleton; probably by indirectly activating myosin. Gamma non-catalytic subunit mediates binding to AMP, ADP and ATP, leading to activate or inhibit AMPK: AMP-binding results in allosteric activation of alpha catalytic subunit (PRKAA1 or PRKAA2) both by inducing phosphorylation and preventing dephosphorylation of catalytic subunits. ADP also stimulates phosphorylation, without stimulating already phosphorylated catalytic subunit. ATP promotes dephosphorylation of catalytic subunit, rendering the AMPK enzyme inactive. The chain is 5'-AMP-activated protein kinase subunit gamma-1 (PRKAG1) from Homo sapiens (Human).